The chain runs to 424 residues: Putative pachytene checkpoint protein 2 (424 aa).

An ATP-binding site is contributed by 179-186; sequence GPPGTGKT.

This sequence belongs to the AAA ATPase family. PCH2 subfamily.

In terms of biological role, plays a key role in chromosome recombination during meiosis. This Caenorhabditis elegans protein is Putative pachytene checkpoint protein 2 (pch-2).